The chain runs to 344 residues: Heat-inducible transcription repressor HrcA (344 aa).

This sequence belongs to the HrcA family.

In terms of biological role, negative regulator of class I heat shock genes (grpE-dnaK-dnaJ and groELS operons). Prevents heat-shock induction of these operons. The chain is Heat-inducible transcription repressor HrcA from Streptococcus pyogenes serotype M6 (strain ATCC BAA-946 / MGAS10394).